The sequence spans 213 residues: Protein Syd (213 aa).

The protein belongs to the Syd family.

Its subcellular location is the cell inner membrane. Its function is as follows. Interacts with the SecY protein in vivo. May bind preferentially to an uncomplexed state of SecY, thus functioning either as a chelating agent for excess SecY in the cell or as a regulatory factor that negatively controls the translocase function. In Shewanella halifaxensis (strain HAW-EB4), this protein is Protein Syd.